The following is a 234-amino-acid chain: Ubiquinone biosynthesis O-methyltransferase (234 aa).

Positions 40, 59, 80, and 123 each coordinate S-adenosyl-L-methionine.

The protein belongs to the methyltransferase superfamily. UbiG/COQ3 family.

The enzyme catalyses a 3-demethylubiquinol + S-adenosyl-L-methionine = a ubiquinol + S-adenosyl-L-homocysteine + H(+). It carries out the reaction a 3-(all-trans-polyprenyl)benzene-1,2-diol + S-adenosyl-L-methionine = a 2-methoxy-6-(all-trans-polyprenyl)phenol + S-adenosyl-L-homocysteine + H(+). The protein operates within cofactor biosynthesis; ubiquinone biosynthesis. O-methyltransferase that catalyzes the 2 O-methylation steps in the ubiquinone biosynthetic pathway. This Coxiella burnetii (strain Dugway 5J108-111) protein is Ubiquinone biosynthesis O-methyltransferase.